We begin with the raw amino-acid sequence, 209 residues long: NAD(P)H-quinone oxidoreductase subunit I (209 aa).

2 4Fe-4S ferredoxin-type domains span residues 55–84 (GRIHFEYDKCIACEVCVRVCPINLPVVDWE) and 95–124 (KHYSIDFGVCIFCGNCVEYCPSNCLSMTEE). Residues cysteine 64, cysteine 67, cysteine 70, cysteine 74, cysteine 104, cysteine 107, cysteine 110, and cysteine 114 each contribute to the [4Fe-4S] cluster site.

The protein belongs to the complex I 23 kDa subunit family. In terms of assembly, NDH-1 is composed of at least 11 different subunits. The cofactor is [4Fe-4S] cluster.

Its subcellular location is the cellular thylakoid membrane. It carries out the reaction a plastoquinone + NADH + (n+1) H(+)(in) = a plastoquinol + NAD(+) + n H(+)(out). The catalysed reaction is a plastoquinone + NADPH + (n+1) H(+)(in) = a plastoquinol + NADP(+) + n H(+)(out). Functionally, NDH-1 shuttles electrons from an unknown electron donor, via FMN and iron-sulfur (Fe-S) centers, to quinones in the respiratory and/or the photosynthetic chain. The immediate electron acceptor for the enzyme in this species is believed to be plastoquinone. Couples the redox reaction to proton translocation, and thus conserves the redox energy in a proton gradient. This is NAD(P)H-quinone oxidoreductase subunit I from Trichodesmium erythraeum (strain IMS101).